Reading from the N-terminus, the 352-residue chain is D-arabitol-phosphate dehydrogenase (352 aa).

Residues cysteine 43, histidine 65, cysteine 96, cysteine 99, cysteine 102, cysteine 110, and glutamate 151 each coordinate Mn(2+).

The protein belongs to the zinc-containing alcohol dehydrogenase family. Homotetramer. It depends on Mn(2+) as a cofactor.

It catalyses the reaction D-arabinitol 1-phosphate + NAD(+) = D-xylulose 5-phosphate + NADH + H(+). Its activity is regulated as follows. Inhibited by EDTA, 4-hydroxymercuribenzoic acid (PHMB), mercury and zinc ions at a concentration of 2 mM. Its function is as follows. Involved in the arabitol catabolism via the arabitol phosphate route. Catalyzes only the transformation of D-arabitol 1-phosphate (Arb1P) and D-arabitol 5-phosphate (Arb5P) into D-xylulose 5-phosphate (Xlu5P) and ribulose 5-phosphate, respectively. It can use both NAD and NADP. This Enterococcus avium (Streptococcus avium) protein is D-arabitol-phosphate dehydrogenase.